The following is an 880-amino-acid chain: Beta-N-acetylglucosaminidase (880 aa).

Positions 1-27 (MKKRLIAPMLLSAASLAFFAMSGSAQA) are cleaved as a signal peptide. SPOR domains are found at residues 70 to 149 (SGTT…VKAY), 150 to 229 (GAAQ…LKET), and 230 to 311 (VKGQ…YQQV). A run of 2 repeats spans residues 439-473 (ITTE…GQTA) and 479-513 (ITTE…GQTA). One can recognise an SH3b domain in the interval 630-700 (TATSTVTADV…VDPNNFSRDS (71 aa)).

Belongs to the glycosyl hydrolase 73 family. As to quaternary structure, homodimer.

It is found in the secreted. The protein resides in the cell wall. The catalysed reaction is an N(4)-(oligosaccharide-(1-&gt;3)-[oligosaccharide-(1-&gt;6)]-beta-D-Man-(1-&gt;4)-beta-D-GlcNAc-(1-&gt;4)-alpha-D-GlcNAc)-L-asparaginyl-[protein] + H2O = an oligosaccharide-(1-&gt;3)-[oligosaccharide-(1-&gt;6)]-beta-D-Man-(1-&gt;4)-D-GlcNAc + N(4)-(N-acetyl-beta-D-glucosaminyl)-L-asparaginyl-[protein]. With respect to regulation, inhibited by diethyl pyrocarbonate, slightly by EDTA. Not inhibited by PMSF, diisopropyl fluorophosphate, 2-mercaptoethanol or N-ethylmaleimide. Functionally, cell wall hydrolase not involved in cell autolysis, competence, sporulation or germination. It hydrolyzes the beta-1,4 glycan bond between the N-acetylglucosaminyl and the N-acetylmuramoyl residues in the glycan chain. The chain is Beta-N-acetylglucosaminidase (lytD) from Bacillus subtilis (strain 168).